We begin with the raw amino-acid sequence, 348 residues long: Ribosomal RNA small subunit methyltransferase C (348 aa).

It belongs to the methyltransferase superfamily. RsmC family. Monomer.

It is found in the cytoplasm. The enzyme catalyses guanosine(1207) in 16S rRNA + S-adenosyl-L-methionine = N(2)-methylguanosine(1207) in 16S rRNA + S-adenosyl-L-homocysteine + H(+). Functionally, specifically methylates the guanine in position 1207 of 16S rRNA in the 30S particle. The chain is Ribosomal RNA small subunit methyltransferase C from Pectobacterium atrosepticum (strain SCRI 1043 / ATCC BAA-672) (Erwinia carotovora subsp. atroseptica).